A 291-amino-acid polypeptide reads, in one-letter code: 4-diphosphocytidyl-2-C-methyl-D-erythritol kinase (291 aa).

K10 is an active-site residue. ATP is bound at residue 94–104 (PVSAGLAGGSS). Residue D136 is part of the active site.

This sequence belongs to the GHMP kinase family. IspE subfamily.

The catalysed reaction is 4-CDP-2-C-methyl-D-erythritol + ATP = 4-CDP-2-C-methyl-D-erythritol 2-phosphate + ADP + H(+). Its pathway is isoprenoid biosynthesis; isopentenyl diphosphate biosynthesis via DXP pathway; isopentenyl diphosphate from 1-deoxy-D-xylulose 5-phosphate: step 3/6. In terms of biological role, catalyzes the phosphorylation of the position 2 hydroxy group of 4-diphosphocytidyl-2C-methyl-D-erythritol. This chain is 4-diphosphocytidyl-2-C-methyl-D-erythritol kinase, found in Listeria innocua serovar 6a (strain ATCC BAA-680 / CLIP 11262).